Reading from the N-terminus, the 421-residue chain is TITAN-like protein (421 aa).

The C2H2-type 1; degenerate zinc-finger motif lies at 11-32 (EFCTVCRFHHDQGSRHKYFPRH). The segment at 70–100 (VWCVFCDEDIVELGSSFACSKAINHFASSDH) adopts a C2H2-type 2; degenerate zinc-finger fold. The segment at 279-306 (ISSSHSTDAGGNVHSGAPPPWLDANDGD) is disordered. 2 consecutive short sequence motifs (nuclear localization signal) follow at residues 328–335 (NRKLNPNR) and 377–384 (TRKESRKE). Residues 376-421 (GTRKESRKEFEKEKRKLVKTESISTESEPVKIQPYISKRARRESGE) form a disordered region. A compositionally biased stretch (basic and acidic residues) spans 377 to 389 (TRKESRKEFEKEK).

As to expression, also present in cotyledons, hypocotyls, stems, veins of sepals and stigmas, and actively dividing tissues such as shoot apical meristem, root tips and emerging true leaves. Weak expression in petals and anthers, and not detected in mature leaves. In seeds, expressed in both the endosperm and embryo.

It localises to the nucleus. Key regulator for endosperm and embryo nuclear divisions. This Arabidopsis thaliana (Mouse-ear cress) protein is TITAN-like protein.